A 251-amino-acid polypeptide reads, in one-letter code: Cytochrome c oxidase subunit 2 (251 aa).

Residues 1–15 (MLDLLRLQLTTFIMN) constitute a propeptide, removed in mature form. The Mitochondrial intermembrane segment spans residues 16-30 (DVPTPYACYFQDSAT). Residues 31–64 (PNQEGILELHDNIMFYLLVILGLVSWMLYTIVMT) form a helical membrane-spanning segment. Over 65-78 (YSKNPIAYKYIKHG) the chain is Mitochondrial matrix. Residues 79–108 (QTIEVIWTIFPAVILLIIAFPSFILLYLCD) form a helical membrane-spanning segment. At 109–251 (EVISPAMTIK…PKFLEWLNEQ (143 aa)) the chain is on the mitochondrial intermembrane side. Cu cation contacts are provided by H186, C221, E223, C225, H229, and M232. Residue E223 participates in Mg(2+) binding.

The protein belongs to the cytochrome c oxidase subunit 2 family. In terms of assembly, component of the cytochrome c oxidase (complex IV, CIV), a multisubunit enzyme composed of 12 subunits. The complex is composed of a catalytic core of 3 subunits COX1, COX2 and COX3, encoded in the mitochondrial DNA, and 9 supernumerary subunits COX4, COX5A (or COX5B), COX6, COX7, COX8, COX9, COX12, COX13 and COX26, which are encoded in the nuclear genome. The complex exists as a monomer or a dimer and forms supercomplexes (SCs) in the inner mitochondrial membrane with a dimer of ubiquinol-cytochrome c oxidoreductase (cytochrome b-c1 complex, complex III, CIII), resulting in 2 different assemblies (supercomplexes III(2)IV and III(2)IV(2)). The cofactor is Cu cation. Post-translationally, the N-terminal sequence of COX2 is processed by IMP1.

The protein resides in the mitochondrion inner membrane. The catalysed reaction is 4 Fe(II)-[cytochrome c] + O2 + 8 H(+)(in) = 4 Fe(III)-[cytochrome c] + 2 H2O + 4 H(+)(out). Its function is as follows. Component of the cytochrome c oxidase, the last enzyme in the mitochondrial electron transport chain which drives oxidative phosphorylation. The respiratory chain contains 3 multisubunit complexes succinate dehydrogenase (complex II, CII), ubiquinol-cytochrome c oxidoreductase (cytochrome b-c1 complex, complex III, CIII) and cytochrome c oxidase (complex IV, CIV), that cooperate to transfer electrons derived from NADH and succinate to molecular oxygen, creating an electrochemical gradient over the inner membrane that drives transmembrane transport and the ATP synthase. Cytochrome c oxidase is the component of the respiratory chain that catalyzes the reduction of oxygen to water. Electrons originating from reduced cytochrome c in the intermembrane space (IMS) are transferred via the dinuclear copper A center (CU(A)) of COX2 and heme A of COX1 to the active site in COX1, a binuclear center (BNC) formed by heme A3 and copper B (CU(B)). The BNC reduces molecular oxygen to 2 water molecules unsing 4 electrons from cytochrome c in the IMS and 4 protons from the mitochondrial matrix. COX2 is a catalytic core subunit which transfers the electrons from cytochrome c via its dinuclear copper A center (CU(A)) to the BNC of the COX1. In Saccharomyces cerevisiae (strain ATCC 204508 / S288c) (Baker's yeast), this protein is Cytochrome c oxidase subunit 2 (COX2).